The following is a 105-amino-acid chain: TMEM14 protein homolog YJR085C (105 aa).

3 consecutive transmembrane segments (helical) span residues 26–46 (IPSLVSGLVFGSVYGIAGYLL), 53–73 (GLEMALGASTLLLGAGVIRGM), and 77–97 (FTKPVPVVLTALGGLGSYYYY).

It belongs to the TMEM14 family.

The protein resides in the mitochondrion. It is found in the membrane. The chain is TMEM14 protein homolog YJR085C from Saccharomyces cerevisiae (strain ATCC 204508 / S288c) (Baker's yeast).